The chain runs to 176 residues: Translation initiation factor IF-3 (176 aa).

It belongs to the IF-3 family. In terms of assembly, monomer.

It localises to the cytoplasm. Functionally, IF-3 binds to the 30S ribosomal subunit and shifts the equilibrium between 70S ribosomes and their 50S and 30S subunits in favor of the free subunits, thus enhancing the availability of 30S subunits on which protein synthesis initiation begins. This chain is Translation initiation factor IF-3, found in Nitratidesulfovibrio vulgaris (strain DSM 19637 / Miyazaki F) (Desulfovibrio vulgaris).